Consider the following 144-residue polypeptide: Putative HTH-type transcriptional regulator aq_268 (144 aa).

The HTH rrf2-type domain occupies 2–133; the sequence is IFSDTVRYAL…KGTTIKDLIN (132 aa).

The protein is Putative HTH-type transcriptional regulator aq_268 of Aquifex aeolicus (strain VF5).